The primary structure comprises 141 residues: Nucleoside diphosphate kinase (141 aa).

Positions 9, 57, 85, 91, 102, and 112 each coordinate ATP. H115 acts as the Pros-phosphohistidine intermediate in catalysis.

The protein belongs to the NDK family. In terms of assembly, homotetramer. Mg(2+) serves as cofactor.

The protein localises to the cytoplasm. It carries out the reaction a 2'-deoxyribonucleoside 5'-diphosphate + ATP = a 2'-deoxyribonucleoside 5'-triphosphate + ADP. The enzyme catalyses a ribonucleoside 5'-diphosphate + ATP = a ribonucleoside 5'-triphosphate + ADP. Its function is as follows. Major role in the synthesis of nucleoside triphosphates other than ATP. The ATP gamma phosphate is transferred to the NDP beta phosphate via a ping-pong mechanism, using a phosphorylated active-site intermediate. This chain is Nucleoside diphosphate kinase, found in Chlamydia trachomatis serovar L2 (strain ATCC VR-902B / DSM 19102 / 434/Bu).